The following is a 717-amino-acid chain: Polyribonucleotide nucleotidyltransferase (717 aa).

The Mg(2+) site is built by Asp-496 and Asp-502. Residues 563–622 (PRLLSFKIDPEMIGLVIGPGGKTIKGITEETGVKIDIDDDGTVTIAAADGEKAKQACNII) enclose the KH domain. Residues 632–700 (GDVYVGRVTR…SKGRVNLTRL (69 aa)) form the S1 motif domain.

The protein belongs to the polyribonucleotide nucleotidyltransferase family. Requires Mg(2+) as cofactor.

It localises to the cytoplasm. It catalyses the reaction RNA(n+1) + phosphate = RNA(n) + a ribonucleoside 5'-diphosphate. Its function is as follows. Involved in mRNA degradation. Catalyzes the phosphorolysis of single-stranded polyribonucleotides processively in the 3'- to 5'-direction. The chain is Polyribonucleotide nucleotidyltransferase from Trichodesmium erythraeum (strain IMS101).